A 264-amino-acid polypeptide reads, in one-letter code: Ribonuclease H (264 aa).

Residues 55 to 88 form a disordered region; it reads GSRYSSSSGPYRRSTTSYGYSPYSSSSSNYSARH. Over residues 56–85 the composition is skewed to low complexity; that stretch reads SRYSSSSGPYRRSTTSYGYSPYSSSSSNYS. Residue serine 97 is modified to Phosphoserine. Positions 120–263 constitute an RNase H type-1 domain; the sequence is CSDRQVVYAD…ADMLARRGAS (144 aa). Residues aspartate 129, glutamate 171, aspartate 191, and aspartate 255 each contribute to the Mg(2+) site.

Belongs to the RNase H family. Mg(2+) serves as cofactor.

The catalysed reaction is Endonucleolytic cleavage to 5'-phosphomonoester.. Functionally, endonuclease that specifically degrades the RNA of RNA-DNA hybrids. The sequence is that of Ribonuclease H (rnh1) from Schizosaccharomyces pombe (strain 972 / ATCC 24843) (Fission yeast).